The sequence spans 375 residues: Chanoclavine-I aldehyde reductase ifgG (375 aa).

Residues Pro-31–Thr-33, Ala-66, Gln-108, and His-176 contribute to the FMN site. Residues His-176 and Asn-179 each coordinate substrate. Catalysis depends on Tyr-181, which acts as the Proton donor. Residues Lys-228, Gly-300, Gly-325 to Arg-326, and Arg-326 contribute to the FMN site. Tyr-353 lines the substrate pocket.

It belongs to the NADH:flavin oxidoreductase/NADH oxidase family. FMN serves as cofactor.

The catalysed reaction is dihydrochanoclavine-I aldehyde + NADP(+) = chanoclavine-I aldehyde + NADPH + H(+). It functions in the pathway alkaloid biosynthesis; ergot alkaloid biosynthesis. Its function is as follows. Chanoclavine-I aldehyde reductase; part of the gene cluster that mediates the biosynthesis of isofumigaclavines, fungal ergot alkaloids. The tryptophan dimethylallyltransferase ifgA catalyzes the first step of ergot alkaloid biosynthesis by condensing dimethylallyl diphosphate (DMAP) and tryptophan to form 4-dimethylallyl-L-tryptophan. The second step is catalyzed by the methyltransferase ifgB that methylates 4-dimethylallyl-L-tryptophan in the presence of S-adenosyl-L-methionine, resulting in the formation of N-methyl-dimethylallyl-L-tryptophan. The catalase ifgD and the FAD-dependent oxidoreductase ifgC then transform N-methyl-dimethylallyl-L-tryptophan to chanoclavine-I which is further oxidized by ifgE in the presence of NAD(+), resulting in the formation of chanoclavine-I aldehyde. The chanoclavine-I aldehyde reductases ifgG and/or fgaOx3 reduce chanoclavine-I aldehyde to dihydrochanoclavine-I aldehyde that spontaneously dehydrates to form 6,8-dimethyl-6,7-didehydroergoline. The festuclavine dehydrogenases ifgF1 and/or ifgF2 then catalyze the reduction of 6,8-dimethyl-6,7-didehydroergoline to form festuclavine. Hydrolysis of festuclavine by a yet undetermined cytochrome P450 monooxygenase (called ifgH) then leads to the formation of isofumigaclavine B which is in turn acetylated by ifgI to isofumigaclavine A. Penicillium roqueforti has interestingly at least two sets of genes for the consumption of chanoclavine-I aldehyde on three different loci, the OYEs ifgG/fgaOx3 and the festuclavine synthase homologs ifgF1/ifgF2. The reason for the duplication of these genes is unclear, probably to ensure the conversion of chanoclavine-I aldehyde by differential gene expression under various environmental conditions. The polypeptide is Chanoclavine-I aldehyde reductase ifgG (Penicillium roqueforti (strain FM164)).